The chain runs to 309 residues: Branched-chain-amino-acid aminotransferase (309 aa).

An N6-(pyridoxal phosphate)lysine modification is found at Lys-160.

The protein belongs to the class-IV pyridoxal-phosphate-dependent aminotransferase family. Homohexamer. It depends on pyridoxal 5'-phosphate as a cofactor.

The catalysed reaction is L-leucine + 2-oxoglutarate = 4-methyl-2-oxopentanoate + L-glutamate. It carries out the reaction L-isoleucine + 2-oxoglutarate = (S)-3-methyl-2-oxopentanoate + L-glutamate. The enzyme catalyses L-valine + 2-oxoglutarate = 3-methyl-2-oxobutanoate + L-glutamate. It participates in amino-acid biosynthesis; L-isoleucine biosynthesis; L-isoleucine from 2-oxobutanoate: step 4/4. The protein operates within amino-acid biosynthesis; L-leucine biosynthesis; L-leucine from 3-methyl-2-oxobutanoate: step 4/4. Its pathway is amino-acid biosynthesis; L-valine biosynthesis; L-valine from pyruvate: step 4/4. In terms of biological role, acts on leucine, isoleucine and valine. The polypeptide is Branched-chain-amino-acid aminotransferase (ilvE) (Escherichia coli O157:H7).